The chain runs to 379 residues: Cytochrome b (379 aa).

4 helical membrane-spanning segments follow: residues 34–54, 78–99, 114–134, and 179–199; these read FGSL…LLAM, WLIR…YLHI, WNTG…GYVL, and FFAL…IHLT. Heme b is bound by residues His84 and His98. Heme b contacts are provided by His183 and His197. His202 contributes to the a ubiquinone binding site. 4 helical membrane passes run 227–247, 289–309, 321–341, and 348–368; these read LKDA…AFFS, LGGV…PFLH, LSQI…WIGS, and FIII…VLFP.

It belongs to the cytochrome b family. As to quaternary structure, the cytochrome bc1 complex contains 11 subunits: 3 respiratory subunits (MT-CYB, CYC1 and UQCRFS1), 2 core proteins (UQCRC1 and UQCRC2) and 6 low-molecular weight proteins (UQCRH/QCR6, UQCRB/QCR7, UQCRQ/QCR8, UQCR10/QCR9, UQCR11/QCR10 and a cleavage product of UQCRFS1). This cytochrome bc1 complex then forms a dimer. Heme b serves as cofactor.

It is found in the mitochondrion inner membrane. In terms of biological role, component of the ubiquinol-cytochrome c reductase complex (complex III or cytochrome b-c1 complex) that is part of the mitochondrial respiratory chain. The b-c1 complex mediates electron transfer from ubiquinol to cytochrome c. Contributes to the generation of a proton gradient across the mitochondrial membrane that is then used for ATP synthesis. The protein is Cytochrome b (MT-CYB) of Rhea americana (Greater rhea).